A 423-amino-acid polypeptide reads, in one-letter code: Hemoglobinase (423 aa).

The signal sequence occupies residues Met-1–Cys-18. A propeptide spanning residues Asn-19–Arg-29 is cleaved from the precursor. Active-site residues include His-145 and Cys-186. Residues Arg-286–Arg-307 form a disordered region. The propeptide occupies Arg-286–Gly-423. Basic and acidic residues predominate over residues Ala-289–Pro-305.

It belongs to the peptidase C13 family. As to expression, gut.

The catalysed reaction is Hydrolysis of proteins and small molecule substrates at -Asn-|-Xaa- bonds.. Functionally, this protease is used by the parasite for degradation of the host globin. The protein is Hemoglobinase (HAEM) of Schistosoma japonicum (Blood fluke).